The primary structure comprises 508 residues: uncharacterized protein (508 aa).

Residues 7 to 29 (ALAIVLALILSLALPELLFQLYP) form a helical membrane-spanning segment.

It is found in the membrane. This is an uncharacterized protein from Archaeoglobus fulgidus (strain ATCC 49558 / DSM 4304 / JCM 9628 / NBRC 100126 / VC-16).